The primary structure comprises 1353 residues: Xanthine dehydrogenase 2 (1353 aa).

Positions 7-93 (MEAIMYVNGV…GMHVISIEGV (87 aa)) constitute a 2Fe-2S ferredoxin-type domain. [2Fe-2S] cluster is bound by residues C45, C50, C53, C75, C115, C118, C151, and C153. The 186-residue stretch at 249-434 (GGNEGITWYR…LSVFLPWTRP (186 aa)) folds into the FAD-binding PCMH-type domain. FAD-binding positions include 277 to 284 (LLVGNTEV), F357, 367 to 371 (CIGGN), D380, L424, and K442. Residues Q788 and F819 each coordinate Mo-molybdopterin. Residues E823 and R901 each contribute to the substrate site. R933 contributes to the Mo-molybdopterin binding site. Positions 935 and 1031 each coordinate substrate. A1100 serves as a coordination point for Mo-molybdopterin. E1289 functions as the Proton acceptor in the catalytic mechanism.

The protein belongs to the xanthine dehydrogenase family. In terms of assembly, homodimer. Requires [2Fe-2S] cluster as cofactor. It depends on FAD as a cofactor. Mo-molybdopterin is required as a cofactor. In terms of tissue distribution, expressed in roots, leaves, stems, flowers and siliques.

The catalysed reaction is xanthine + NAD(+) + H2O = urate + NADH + H(+). It catalyses the reaction hypoxanthine + NAD(+) + H2O = xanthine + NADH + H(+). Key enzyme involved in purine catabolism. Catalyzes the oxidation of hypoxanthine to xanthine and the oxidation of xanthine to urate. Regulates the level of ureides and plays a role during plant growth and development and senescence. This is Xanthine dehydrogenase 2 (XDH2) from Arabidopsis thaliana (Mouse-ear cress).